A 124-amino-acid chain; its full sequence is Small ribosomal subunit protein uS11 (124 aa).

This sequence belongs to the universal ribosomal protein uS11 family. Part of the 30S ribosomal subunit. Interacts with proteins S7 and S18. Binds to IF-3.

Its function is as follows. Located on the platform of the 30S subunit, it bridges several disparate RNA helices of the 16S rRNA. Forms part of the Shine-Dalgarno cleft in the 70S ribosome. In Anaplasma phagocytophilum (strain HZ), this protein is Small ribosomal subunit protein uS11.